The sequence spans 180 residues: Interleukin-17B (180 aa).

The first 22 residues, M1 to P22, serve as a signal peptide directing secretion. Residues P22–Q44 form a disordered region. Positions R23–Q32 are enriched in basic residues. N75 carries an N-linked (GlcNAc...) asparagine glycan. Intrachain disulfides connect C121/C176 and C126/C178.

This sequence belongs to the IL-17 family.

Its subcellular location is the secreted. In terms of biological role, stimulates the release of tumor necrosis factor alpha and IL-1-beta from the monocytic cell line THP-1. The chain is Interleukin-17B (Il17b) from Mus musculus (Mouse).